The following is a 452-amino-acid chain: tRNA modification GTPase MnmE (452 aa).

Residues arginine 21, glutamate 82, and arginine 121 each coordinate (6S)-5-formyl-5,6,7,8-tetrahydrofolate. The TrmE-type G domain maps to 214–372 (GARVVLVGRP…LAKTIATTLL (159 aa)). Asparagine 224 contributes to the K(+) binding site. Residues 224-229 (NVGKSS), 243-249 (TPIPGTT), 268-271 (DTAG), and 353-355 (SAR) contribute to the GTP site. Serine 228 serves as a coordination point for Mg(2+). Residues threonine 243, isoleucine 245, and threonine 248 each coordinate K(+). Residue threonine 249 coordinates Mg(2+). (6S)-5-formyl-5,6,7,8-tetrahydrofolate is bound at residue lysine 452.

The protein belongs to the TRAFAC class TrmE-Era-EngA-EngB-Septin-like GTPase superfamily. TrmE GTPase family. Homodimer. Heterotetramer of two MnmE and two MnmG subunits. Requires K(+) as cofactor.

The protein resides in the cytoplasm. Its function is as follows. Exhibits a very high intrinsic GTPase hydrolysis rate. Involved in the addition of a carboxymethylaminomethyl (cmnm) group at the wobble position (U34) of certain tRNAs, forming tRNA-cmnm(5)s(2)U34. This is tRNA modification GTPase MnmE from Chloroflexus aurantiacus (strain ATCC 29366 / DSM 635 / J-10-fl).